The primary structure comprises 223 residues: uncharacterized protein (223 aa).

2 consecutive transmembrane segments (helical) span residues 1–21 (MLII…TFYL) and 45–65 (ILIG…TSLI).

The protein resides in the cell membrane. This is an uncharacterized protein from Haemophilus influenzae (strain ATCC 51907 / DSM 11121 / KW20 / Rd).